The following is a 368-amino-acid chain: S-adenosylmethionine:tRNA ribosyltransferase-isomerase (368 aa).

This sequence belongs to the QueA family. As to quaternary structure, monomer.

It localises to the cytoplasm. It carries out the reaction 7-aminomethyl-7-carbaguanosine(34) in tRNA + S-adenosyl-L-methionine = epoxyqueuosine(34) in tRNA + adenine + L-methionine + 2 H(+). It participates in tRNA modification; tRNA-queuosine biosynthesis. In terms of biological role, transfers and isomerizes the ribose moiety from AdoMet to the 7-aminomethyl group of 7-deazaguanine (preQ1-tRNA) to give epoxyqueuosine (oQ-tRNA). This chain is S-adenosylmethionine:tRNA ribosyltransferase-isomerase, found in Methylorubrum extorquens (strain CM4 / NCIMB 13688) (Methylobacterium extorquens).